The primary structure comprises 902 residues: 4-hydroxyphenylacetate decarboxylase glycyl radical subunit (902 aa).

A PFL domain is found at 38–774; the sequence is KRAEDLLDVY…ATLATPDGRL (737 aa). 4-hydroxyphenylacetate is bound by residues serine 348 and cysteine 507. Cysteine 507 serves as the catalytic Cysteine radical intermediate. Glutamate 509 (proton donor) is an active-site residue. 4-hydroxyphenylacetate is bound by residues histidine 540 and glutamate 641. Residues 782–902 form the Glycine radical domain; it reads GSVSAYAGTD…VIARTEYEGV (121 aa). The residue at position 877 (glycine 877) is a Glycine radical.

Belongs to the glycyl radical enzyme (GRE) family. HPAD subfamily. As to quaternary structure, heterooctamer consisting of 4 large (HpdB) subunits and 4 small (HpdC) subunits, arranged as a tetramer of heterodimers. Also forms a catalytically inactive homodimer. In terms of processing, requires the activating protein CsdA to generate the key active site glycyl radical that is involved in catalysis. Phosphorylated on serine. Phosphorylation may trigger the formation of the active heterooctamers and thereby regulates enzyme activity.

The enzyme catalyses 4-hydroxyphenylacetate + H(+) = 4-methylphenol + CO2. It carries out the reaction 3,4-dihydroxyphenylacetate + H(+) = 4-methylcatechol + CO2. In terms of biological role, glycyl radical subunit of the HPA decarboxylase that decarboxylates phenylacetates with a hydroxyl group in the p-position. Active toward 4-hydroxyphenylacetate and 3,4-dihydroxyphenylacetate, forming 4-methylphenol and 4-methylcatechol, respectively. Is likely involved in the catabolism of aromatic amino acids such as tyrosine fermentation. 4-methylphenol (p-cresol) formation provides metabolic toxicity, which allows an active suppression of other microbes and may provide growth advantages for the producers in highly competitive environments. The large subunit is the catalytic subunit that binds the substrate. The protein is 4-hydroxyphenylacetate decarboxylase glycyl radical subunit of Clostridioides difficile (strain 630) (Peptoclostridium difficile).